The sequence spans 95 residues: Co-chaperonin GroES (95 aa).

It belongs to the GroES chaperonin family. Heptamer of 7 subunits arranged in a ring. Interacts with the chaperonin GroEL.

The protein localises to the cytoplasm. In terms of biological role, together with the chaperonin GroEL, plays an essential role in assisting protein folding. The GroEL-GroES system forms a nano-cage that allows encapsulation of the non-native substrate proteins and provides a physical environment optimized to promote and accelerate protein folding. GroES binds to the apical surface of the GroEL ring, thereby capping the opening of the GroEL channel. This is Co-chaperonin GroES from Glaesserella parasuis serovar 5 (strain SH0165) (Haemophilus parasuis).